The sequence spans 505 residues: Lysine--tRNA ligase (505 aa).

Residues Glu-415 and Glu-422 each contribute to the Mg(2+) site.

It belongs to the class-II aminoacyl-tRNA synthetase family. Homodimer. It depends on Mg(2+) as a cofactor.

It localises to the cytoplasm. It carries out the reaction tRNA(Lys) + L-lysine + ATP = L-lysyl-tRNA(Lys) + AMP + diphosphate. The protein is Lysine--tRNA ligase of Xanthomonas axonopodis pv. citri (strain 306).